The sequence spans 124 residues: Small ribosomal subunit protein uS12 (124 aa).

A disordered region spans residues 9–28 (KSERTVQKNQTKSPALDSCP). Residue Asp-89 is modified to 3-methylthioaspartic acid.

Belongs to the universal ribosomal protein uS12 family. As to quaternary structure, part of the 30S ribosomal subunit. Contacts proteins S8 and S17. May interact with IF1 in the 30S initiation complex.

Functionally, with S4 and S5 plays an important role in translational accuracy. In terms of biological role, interacts with and stabilizes bases of the 16S rRNA that are involved in tRNA selection in the A site and with the mRNA backbone. Located at the interface of the 30S and 50S subunits, it traverses the body of the 30S subunit contacting proteins on the other side and probably holding the rRNA structure together. The combined cluster of proteins S8, S12 and S17 appears to hold together the shoulder and platform of the 30S subunit. The protein is Small ribosomal subunit protein uS12 of Bdellovibrio bacteriovorus (strain ATCC 15356 / DSM 50701 / NCIMB 9529 / HD100).